A 288-amino-acid polypeptide reads, in one-letter code: Cyclin-dependent kinase 2 homolog (288 aa).

A Protein kinase domain is found at 4–284; the sequence is YHGLEKIGEG…AKQALEHAYF (281 aa). ATP-binding positions include 10–18 and lysine 32; that span reads IGEGTYGVV. Phosphothreonine is present on threonine 14. At tyrosine 15 the chain carries Phosphotyrosine. Aspartate 125 acts as the Proton acceptor in catalysis. Position 158 is a phosphothreonine (threonine 158).

Belongs to the protein kinase superfamily. CMGC Ser/Thr protein kinase family. CDC2/CDKX subfamily. May form a complex composed of at least the catalytic subunit CRK2 and a cyclin. Mg(2+) serves as cofactor. Post-translationally, autophosphorylates in presence of cyclin cyc-1 but not in presence of cyclin cyc-3.

It localises to the cytoplasm. It carries out the reaction L-seryl-[protein] + ATP = O-phospho-L-seryl-[protein] + ADP + H(+). The enzyme catalyses L-threonyl-[protein] + ATP = O-phospho-L-threonyl-[protein] + ADP + H(+). It catalyses the reaction [DNA-directed RNA polymerase] + ATP = phospho-[DNA-directed RNA polymerase] + ADP + H(+). Phosphorylation at Thr-14 or Tyr-15 inactivates the enzyme, while phosphorylation at Thr-158 activates it. Activated by cyclin cyc-1 in vitro. Activated by cyclin cyc-3 in vitro. In terms of biological role, serine/threonine-protein kinase. Involved in the control of the cell cycle. Required for entry into S-phase and mitosis. Probable component of the kinase complex that phosphorylates the repetitive C-terminus of RNA polymerase II. In schizonts, phosphorylates ORC1 resulting in its dissociation from DNA, relocalization to the cytoplasm and likely its degradation. This is Cyclin-dependent kinase 2 homolog from Plasmodium falciparum (isolate 3D7).